Consider the following 163-residue polypeptide: Aspartate 1-decarboxylase (163 aa).

The active-site Schiff-base intermediate with substrate; via pyruvic acid is the Ser25. Ser25 carries the pyruvic acid (Ser) modification. Thr57 serves as a coordination point for substrate. Tyr58 (proton donor) is an active-site residue. Residue Gly73 to Ala75 coordinates substrate.

It belongs to the PanD family. In terms of assembly, heterooctamer of four alpha and four beta subunits. The cofactor is pyruvate. In terms of processing, is synthesized initially as an inactive proenzyme, which is activated by self-cleavage at a specific serine bond to produce a beta-subunit with a hydroxyl group at its C-terminus and an alpha-subunit with a pyruvoyl group at its N-terminus.

It is found in the cytoplasm. The enzyme catalyses L-aspartate + H(+) = beta-alanine + CO2. It functions in the pathway cofactor biosynthesis; (R)-pantothenate biosynthesis; beta-alanine from L-aspartate: step 1/1. Catalyzes the pyruvoyl-dependent decarboxylation of aspartate to produce beta-alanine. The sequence is that of Aspartate 1-decarboxylase from Saccharopolyspora erythraea (strain ATCC 11635 / DSM 40517 / JCM 4748 / NBRC 13426 / NCIMB 8594 / NRRL 2338).